A 239-amino-acid polypeptide reads, in one-letter code: 1-(5-phosphoribosyl)-5-[(5-phosphoribosylamino)methylideneamino] imidazole-4-carboxamide isomerase (239 aa).

The Proton acceptor role is filled by aspartate 8. The active-site Proton donor is aspartate 129.

It belongs to the HisA/HisF family.

It localises to the cytoplasm. It catalyses the reaction 1-(5-phospho-beta-D-ribosyl)-5-[(5-phospho-beta-D-ribosylamino)methylideneamino]imidazole-4-carboxamide = 5-[(5-phospho-1-deoxy-D-ribulos-1-ylimino)methylamino]-1-(5-phospho-beta-D-ribosyl)imidazole-4-carboxamide. It functions in the pathway amino-acid biosynthesis; L-histidine biosynthesis; L-histidine from 5-phospho-alpha-D-ribose 1-diphosphate: step 4/9. This Legionella pneumophila (strain Paris) protein is 1-(5-phosphoribosyl)-5-[(5-phosphoribosylamino)methylideneamino] imidazole-4-carboxamide isomerase.